A 184-amino-acid polypeptide reads, in one-letter code: ADP-ribosylation factor-like protein 2 (184 aa).

Gly-2 carries N-myristoyl glycine lipidation. GTP-binding positions include Gly-23 to Thr-30, Asp-66 to Gln-70, and Asn-125 to Asp-128.

Belongs to the small GTPase superfamily. Arf family. Ubiquitously expressed.

Functionally, GTP-binding protein involved in protein trafficking; may modulate vesicle budding and uncoating within the Golgi apparatus. This is ADP-ribosylation factor-like protein 2 (Arl2) from Drosophila melanogaster (Fruit fly).